The following is a 148-amino-acid chain: Large ribosomal subunit protein bL9 (148 aa).

It belongs to the bacterial ribosomal protein bL9 family.

Its function is as follows. Binds to the 23S rRNA. The chain is Large ribosomal subunit protein bL9 from Pseudomonas syringae pv. tomato (strain ATCC BAA-871 / DC3000).